The following is an 88-amino-acid chain: Small ribosomal subunit protein uS17 (88 aa).

It belongs to the universal ribosomal protein uS17 family. As to quaternary structure, part of the 30S ribosomal subunit.

One of the primary rRNA binding proteins, it binds specifically to the 5'-end of 16S ribosomal RNA. In Ruthia magnifica subsp. Calyptogena magnifica, this protein is Small ribosomal subunit protein uS17.